We begin with the raw amino-acid sequence, 349 residues long: 11-beta-hydroxysteroid dehydrogenase A (349 aa).

A helical; Signal-anchor for type II membrane protein transmembrane segment spans residues 10–30; sequence LVAPPFTFFFLCLFLPPYWGL. The Proline-knob motif lies at 13 to 26; that stretch reads PPFTFFFLCLFLPP. NADP(+) is bound by residues 54-80, Asp105, and 132-135; these read GASS…SARR and NAAI. A substrate-binding site is contributed by Ser184. Catalysis depends on Tyr197, which acts as the Proton acceptor. NADP(+) is bound by residues 197 to 201 and Lys201; that span reads YSASK.

Belongs to the short-chain dehydrogenases/reductases (SDR) family. As to expression, expressed in seeds (at protein level).

The protein localises to the lipid droplet. The protein resides in the membrane. The enzyme catalyses an 11beta-hydroxysteroid + NADP(+) = an 11-oxosteroid + NADPH + H(+). Its function is as follows. Has dehydrogenase activity against 11 beta-hydroxysteroid and 17 beta-hydroxysteroid. May be involved in signal transduction regulated by various sterols. In Arachis hypogaea (Peanut), this protein is 11-beta-hydroxysteroid dehydrogenase A.